The chain runs to 150 residues: Transcription antitermination protein NusB (150 aa).

The protein belongs to the NusB family.

Involved in transcription antitermination. Required for transcription of ribosomal RNA (rRNA) genes. Binds specifically to the boxA antiterminator sequence of the ribosomal RNA (rrn) operons. The protein is Transcription antitermination protein NusB of Streptococcus equi subsp. zooepidemicus (strain H70).